A 529-amino-acid chain; its full sequence is Listeriolysin O (529 aa).

Positions 1-24 are cleaved as a signal peptide; it reads MKKIMLVFITLILVSLPIAQQTEA. 4 beta stranded membrane passes run 214–227, 234–243, 312–321, and 329–341; these read ESQL…AFKA, VNFGAISEGK, STKVKAAFDA, and SGDV…IKNS. The short motif at 483-493 is the Conserved undecapeptide element; sequence ECTGLAWEWWR. The short motif at 515 to 516 is the Cholesterol binding element; it reads TL.

This sequence belongs to the cholesterol-dependent cytolysin family. In terms of assembly, homooligomeric pore complex of 35 to 50 subunits; when inserted in the host membrane.

The protein localises to the secreted. Its subcellular location is the host membrane. The protein resides in the host cell membrane. Activity of listeriolysin O is regulated on multiple levels. It should be high in the phagosome, thereby allowing escape of the bacteria from the phagosomal compartment. Then, once inside the host cytosol, the activity must be controlled to prevent lysis of the host plasma membrane and loss of the intracellular environment. A cholesterol-dependent toxin that causes cytolysis by forming pores in cholesterol containing host membranes. After binding to target membranes, the protein undergoes a major conformation change, leading to its insertion in the host membrane and formation of an oligomeric pore complex. Cholesterol is required for binding to host membranes, membrane insertion and pore formation; cholesterol binding is mediated by a Thr-Leu pair in the C-terminus. Acts as a major virulence factor required for the escape of bacteria from phagosomal vacuoles and entry into the host cytosol. Can be reversibly inactivated by oxidation. In Listeria monocytogenes serotype 4b (strain F2365), this protein is Listeriolysin O (hly).